The primary structure comprises 402 residues: Imidazolonepropionase (402 aa).

Positions 66 and 68 each coordinate Fe(3+). Zn(2+) contacts are provided by histidine 66 and histidine 68. Residues arginine 75, tyrosine 138, and histidine 171 each coordinate 4-imidazolone-5-propanoate. N-formimidoyl-L-glutamate is bound at residue tyrosine 138. Residue histidine 236 coordinates Fe(3+). Residue histidine 236 participates in Zn(2+) binding. Glutamine 239 serves as a coordination point for 4-imidazolone-5-propanoate. Position 311 (aspartate 311) interacts with Fe(3+). Aspartate 311 contacts Zn(2+). N-formimidoyl-L-glutamate is bound by residues asparagine 313 and glycine 315. Position 316 (threonine 316) interacts with 4-imidazolone-5-propanoate.

The protein belongs to the metallo-dependent hydrolases superfamily. HutI family. The cofactor is Zn(2+). Requires Fe(3+) as cofactor.

Its subcellular location is the cytoplasm. The catalysed reaction is 4-imidazolone-5-propanoate + H2O = N-formimidoyl-L-glutamate. Its pathway is amino-acid degradation; L-histidine degradation into L-glutamate; N-formimidoyl-L-glutamate from L-histidine: step 3/3. In terms of biological role, catalyzes the hydrolytic cleavage of the carbon-nitrogen bond in imidazolone-5-propanoate to yield N-formimidoyl-L-glutamate. It is the third step in the universal histidine degradation pathway. The polypeptide is Imidazolonepropionase (Pseudomonas aeruginosa (strain ATCC 15692 / DSM 22644 / CIP 104116 / JCM 14847 / LMG 12228 / 1C / PRS 101 / PAO1)).